The following is a 1052-amino-acid chain: Kruppel-like factor 18 (1052 aa).

C2H2-type zinc fingers lie at residues 964 to 988 (YVCT…MRKH), 994 to 1018 (YVCD…KKRH), and 1024 to 1046 (YLCS…AKVH).

The protein belongs to the krueppel C2H2-type zinc-finger protein family.

It is found in the nucleus. In Homo sapiens (Human), this protein is Kruppel-like factor 18.